Consider the following 352-residue polypeptide: tRNA-specific 2-thiouridylase MnmA (352 aa).

ATP contacts are provided by residues 7-14 and Leu-33; that span reads GLSGGVDS. Cys-94 acts as the Nucleophile in catalysis. Cys-94 and Cys-193 form a disulfide bridge. Gly-119 lines the ATP pocket. The segment at 143–145 is interaction with tRNA; the sequence is KDQ. Cys-193 acts as the Cysteine persulfide intermediate in catalysis. Positions 298 to 299 are interaction with tRNA; sequence RY.

It belongs to the MnmA/TRMU family.

The protein localises to the cytoplasm. The enzyme catalyses S-sulfanyl-L-cysteinyl-[protein] + uridine(34) in tRNA + AH2 + ATP = 2-thiouridine(34) in tRNA + L-cysteinyl-[protein] + A + AMP + diphosphate + H(+). Its function is as follows. Catalyzes the 2-thiolation of uridine at the wobble position (U34) of tRNA, leading to the formation of s(2)U34. The polypeptide is tRNA-specific 2-thiouridylase MnmA (Nostoc sp. (strain PCC 7120 / SAG 25.82 / UTEX 2576)).